The sequence spans 1005 residues: Regulator of telomere elongation helicase 1 homolog (1005 aa).

The region spanning 7–322 (AGIPVHFPFE…KEMLLELEKA (316 aa)) is the Helicase ATP-binding domain. Residue 42–49 (SPTGTGKT) participates in ATP binding. 4 residues coordinate [4Fe-4S] cluster: cysteine 145, cysteine 163, cysteine 172, and cysteine 208. Positions 251–254 (DEAH) match the DEAH box motif. Threonine 876 bears the Phosphothreonine mark. The tract at residues 893 to 917 (NGPLKTEPSEPATTSSSFCPTPAQS) is disordered.

It belongs to the helicase family. RAD3/XPD subfamily.

It localises to the nucleus. The catalysed reaction is ATP + H2O = ADP + phosphate + H(+). Its function is as follows. A probable ATP-dependent DNA helicase implicated in DNA repair and the maintenance of genomic stability. Acts as an anti-recombinase to counteract toxic recombination and limit crossover during meiosis. Regulates meiotic recombination and crossover homeostasis by physically dissociating strand invasion events and thereby promotes noncrossover repair by meiotic synthesis dependent strand annealing (SDSA) as well as disassembly of D loop recombination intermediates. The protein is Regulator of telomere elongation helicase 1 homolog of Drosophila virilis (Fruit fly).